A 358-amino-acid chain; its full sequence is Putative UDP-kanosamine synthase oxidoreductase subunit (358 aa).

As to quaternary structure, interacts with RifK.

The catalysed reaction is UDP-alpha-D-glucose + NAD(+) = UDP-3-oxo-alpha-D-glucose + NADH + H(+). It functions in the pathway antibiotic biosynthesis; rifamycin B biosynthesis. Functionally, in a complex with RifK, RifL may catalyze the oxidation of UDP-glucose to UDP-3-keto-D-glucose, which would then be used by RifK to produce UDP-kanosamine. Is not able to use dTDP-glucose as substrate. In Amycolatopsis mediterranei (strain S699) (Nocardia mediterranei), this protein is Putative UDP-kanosamine synthase oxidoreductase subunit (rifL).